The chain runs to 612 residues: MIVDNSKDFDLKSFLANLTTHSGVYRMLDKHGEIIYVGKAKNLKNRVNSYFSKGAKDSKTLMMVEQIARIEITITPSDYEAYLLENNLIKQHRPKYNILFKDDKSYPYLVISRDKFPRVSFYRGKSAYKKGQCFGPYVSISSVKNTLNTIQKIFPIRQCENSYYKSRVRPCLQYQIKRCLAPCVGLVSQQQYDEQLAILKKFLAGKFSSVLEEISAKMYQASEDMEYEKAQVYRDQLVVLRKLQQQQIVDIQEDKTFDVIGIYMQDSYASIALLQIQNGDVVADRHWSIDAKGQDKTSIMHAFLSHFYLGDEIRNIWPKNIILSKVEFADITDLMNSISQKIGQAINWIIAPAADNLKWLKLAEVNARQKLNIYTSSKSQYQKRLESLKEFLELEKDIKRIECFDISHFQGEATIASCVVYTDDGEDRKSHRRYNIKGIKSGDDYAAIHQAVSRRVSSGLEADNLPDVMIIDGGKGQIHQAEAVFREYGIQDKVQLVSLGKGVERISGKEKIYKGFDDTEYTLDEHNPGFLLLRQVRDSAHDHAIKGQRKKVSANRQSSIIEEIEGVGSKRRKALLRYFGGWQELSRASVDEIAKVKGISKKLAQEIWECFH.

The GIY-YIG domain maps to 20–98; it reads THSGVYRMLD…IKQHRPKYNI (79 aa). The UVR domain occupies 208–243; it reads SSVLEEISAKMYQASEDMEYEKAQVYRDQLVVLRKL.

The protein belongs to the UvrC family. In terms of assembly, interacts with UvrB in an incision complex.

It localises to the cytoplasm. Its function is as follows. The UvrABC repair system catalyzes the recognition and processing of DNA lesions. UvrC both incises the 5' and 3' sides of the lesion. The N-terminal half is responsible for the 3' incision and the C-terminal half is responsible for the 5' incision. This Francisella tularensis subsp. mediasiatica (strain FSC147) protein is UvrABC system protein C.